We begin with the raw amino-acid sequence, 152 residues long: Fibroblast growth factor 1 (152 aa).

Ala-2 carries the N-acetylalanine modification. Residues 2 to 15 constitute a propeptide that is removed on maturation; sequence AEGEITTFTALTEK. Asn-33 provides a ligand contact to heparin. Positions 127–143 are heparin-binding; that stretch reads KKNGSCKRGPRTHYGQK.

This sequence belongs to the heparin-binding growth factors family. Monomer. Homodimer. Interacts with FGFR1, FGFR2, FGFR3 and FGFR4. Affinity between fibroblast growth factors (FGFs) and their receptors is increased by heparan sulfate glycosaminoglycans that function as coreceptors. Found in a complex with FGFBP1, FGF1 and FGF2. Interacts with FGFBP1. Part of a Cu(2+)-dependent multiprotein aggregate containing FGF1, S100A13 and SYT1. Interacts with SYT1. Interacts with S100A13. Interacts with LRRC59. Interacts with CSNKA, CSNKB and FIBP. While binding with LRRC59, CSNKA and FIBP seem mutually exclusive, CSNKB and FIBP may cooperatively interact with FGF1. Forms a ternary complex with FGFR1 and ITGAV:ITGB3 and induces the recruitment of PTPN11 to the complex. Post-translationally, in the nucleus, phosphorylated by PKC/PRKCD.

The protein resides in the secreted. Its subcellular location is the cytoplasm. It localises to the cell cortex. It is found in the cytosol. The protein localises to the nucleus. In terms of biological role, plays an important role in the regulation of cell survival, cell division, angiogenesis, cell differentiation and cell migration. Functions as a potent mitogen in vitro. Acts as a ligand for FGFR1 and integrins. Binds to FGFR1 in the presence of heparin leading to FGFR1 dimerization and activation via sequential autophosphorylation on tyrosine residues which act as docking sites for interacting proteins, leading to the activation of several signaling cascades. Binds to integrin ITGAV:ITGB3. Its binding to integrin, subsequent ternary complex formation with integrin and FGFR1, and the recruitment of PTPN11 to the complex are essential for FGF1 signaling. Induces the phosphorylation and activation of FGFR1, FRS2, MAPK3/ERK1, MAPK1/ERK2 and AKT1. Can induce angiogenesis. This Sus scrofa (Pig) protein is Fibroblast growth factor 1 (FGF1).